Reading from the N-terminus, the 444-residue chain is Biotin carboxylase 2 (444 aa).

The Biotin carboxylation domain occupies 1 to 444 (MFTKVLIANR…VTTDFLKQHL (444 aa)). Residues K116, K158, 164–165 (GG), 200–203 (EKVI), H208, and H235 contribute to the ATP site. One can recognise an ATP-grasp domain in the interval 120–317 (RKAMEAAGVP…LVEQQLRIAA (198 aa)). K237 contributes to the hydrogencarbonate binding site. 2 residues coordinate ATP: E275 and E288. Residues E275, E288, and N290 each coordinate Mg(2+). Mn(2+)-binding residues include E275, E288, and N290. Hydrogencarbonate-binding residues include R292, V295, and R338. Residue R292 is part of the active site. Position 338 (R338) interacts with biotin.

As to quaternary structure, acetyl-CoA carboxylase is a heterohexamer of biotin carboxyl carrier protein, biotin carboxylase and the two subunits of carboxyl transferase in a 2:2 complex. Mg(2+) is required as a cofactor. Mn(2+) serves as cofactor.

It carries out the reaction N(6)-biotinyl-L-lysyl-[protein] + hydrogencarbonate + ATP = N(6)-carboxybiotinyl-L-lysyl-[protein] + ADP + phosphate + H(+). It functions in the pathway lipid metabolism; malonyl-CoA biosynthesis; malonyl-CoA from acetyl-CoA: step 1/1. Its function is as follows. This protein is a component of the acetyl coenzyme A carboxylase complex; first, biotin carboxylase catalyzes the carboxylation of the carrier protein and then the transcarboxylase transfers the carboxyl group to form malonyl-CoA. This Bacillus subtilis (strain 168) protein is Biotin carboxylase 2 (accC2).